The primary structure comprises 189 residues: MEVILLERIGRLGQMGDTVKVKDGYARNFLLPQGKALRANEANKKKFEGQRAQLEAQNLERKNEAQAVADKLNGESFIVVRSAGETGQLYGSVSTRDIAEIITANGFTLHRNQVELNHPIKTIGLHEVSVLLHPEVQVKVMVNIARSTEEAERQAKGEDLTSIEAIYGIEEQPLSEEVFDDEDEAEDQA.

This sequence belongs to the bacterial ribosomal protein bL9 family.

Its function is as follows. Binds to the 23S rRNA. The protein is Large ribosomal subunit protein bL9 of Brucella ovis (strain ATCC 25840 / 63/290 / NCTC 10512).